The following is a 192-amino-acid chain: Large ribosomal subunit protein uL3 (192 aa).

The protein belongs to the universal ribosomal protein uL3 family. Part of the 50S ribosomal subunit. Forms a cluster with proteins L14 and L19.

One of the primary rRNA binding proteins, it binds directly near the 3'-end of the 23S rRNA, where it nucleates assembly of the 50S subunit. This is Large ribosomal subunit protein uL3 (rplC) from Wolinella succinogenes (strain ATCC 29543 / DSM 1740 / CCUG 13145 / JCM 31913 / LMG 7466 / NCTC 11488 / FDC 602W) (Vibrio succinogenes).